Consider the following 120-residue polypeptide: Cytochrome b5 (120 aa).

The Cytochrome b5 heme-binding domain maps to 2 to 78 (PKVYSYQEVA…LKGLYIGDVD (77 aa)). Heme contacts are provided by His37 and His61. The chain crosses the membrane as a helical span at residues 98–118 (GSGTLVVILAILMLGVAYYLL).

Belongs to the cytochrome b5 family.

It is found in the endoplasmic reticulum membrane. Its subcellular location is the microsome membrane. Membrane bound hemoprotein which function as an electron carrier for several membrane bound oxygenases. It plays a role in fatty-acid desaturation and is also involved in several steps of the sterol biosynthesis pathway, particularly in the 4-demethylation of the 4,4'-dimethyl zymosterol. The polypeptide is Cytochrome b5 (CYB5) (Saccharomyces cerevisiae (strain ATCC 204508 / S288c) (Baker's yeast)).